The following is a 535-amino-acid chain: Alpha-1,3-mannosyl-glycoprotein 4-beta-N-acetylglucosaminyltransferase A (535 aa).

Topologically, residues 1-4 are cytoplasmic; that stretch reads MRLR. Residues 5 to 27 form a helical; Signal-anchor for type II membrane protein membrane-spanning segment; sequence NGTVATALAFITSFLTLSWYTTW. The stretch at 28–63 forms a coiled coil; it reads QNGKEKLIAYQREFLALKERLRIAEHRISQRSSELN. Over 28-535 the chain is Lumenal; it reads QNGKEKLIAY…NEIHIKKATK (508 aa). 2 N-linked (GlcNAc...) asparagine glycosylation sites follow: asparagine 77 and asparagine 458. At serine 474 the chain carries Phosphoserine.

This sequence belongs to the glycosyltransferase 54 family. Requires a divalent metal cation as cofactor. N-glycosylated.

It is found in the golgi apparatus membrane. It localises to the secreted. It carries out the reaction N(4)-{beta-D-GlcNAc-(1-&gt;2)-alpha-D-Man-(1-&gt;3)-[beta-D-GlcNAc-(1-&gt;2)-alpha-D-Man-(1-&gt;6)]-beta-D-Man-(1-&gt;4)-beta-D-GlcNAc-(1-&gt;4)-beta-D-GlcNAc}-L-asparaginyl-[protein] + UDP-N-acetyl-alpha-D-glucosamine = N(4)-{beta-D-GlcNAc-(1-&gt;2)-[beta-D-GlcNAc-(1-&gt;4)]-alpha-D-Man-(1-&gt;3)-[beta-D-GlcNAc-(1-&gt;2)-alpha-D-Man-(1-&gt;6)]-beta-D-Man-(1-&gt;4)-beta-D-GlcNAc-(1-&gt;4)-beta-D-GlcNAc}-L-asparaginyl-[protein] + UDP + H(+). The enzyme catalyses an N(4)-{beta-D-GlcNAc-(1-&gt;2)-alpha-D-Man-(1-&gt;3)-[alpha-D-Man-(1-&gt;6)]-beta-D-Man-(1-&gt;4)-beta-D-GlcNAc-(1-&gt;4)-beta-D-GlcNAc}-L-asparaginyl-[protein] + UDP-N-acetyl-alpha-D-glucosamine = an N(4)-{beta-D-GlcNAc-(1-&gt;2)-[beta-D-GlcNAc-(1-&gt;4)]-alpha-D-Man-(1-&gt;3)-[alpha-D-Man-(1-&gt;6)]-beta-D-Man-(1-&gt;4)-beta-D-GlcNAc-(1-&gt;4)-beta-D-GlcNAc}-L-asparaginyl-[protein] + UDP + H(+). It catalyses the reaction an N(4)-{beta-D-GlcNAc-(1-&gt;2)-alpha-D-Man-(1-&gt;3)-[beta-D-GlcNAc-(1-&gt;2)-[beta-D-GlcNAc-(1-&gt;6)]-alpha-D-Man-(1-&gt;6)]-beta-D-Man-(1-&gt;4)-beta-D-GlcNAc-(1-&gt;4)-beta-D-GlcNAc}-L-asparaginyl-[protein] + UDP-N-acetyl-alpha-D-glucosamine = an N(4)-{beta-D-GlcNAc-(1-&gt;2)-[beta-D-GlcNAc-(1-&gt;4)]-alpha-D-Man-(1-&gt;3)-[beta-D-GlcNAc-(1-&gt;2)-[beta-D-GlcNAc-(1-&gt;6)]-alpha-D-Man-(1-&gt;6)]-beta-D-Man-(1-&gt;4)-beta-D-GlcNAc-(1-&gt;4)-beta-D-GlcNAc}-L-asparaginyl-[protein] + UDP + H(+). The catalysed reaction is an N(4)-{beta-D-GlcNAc-(1-&gt;2)-alpha-D-Man-(1-&gt;3)-[beta-D-GlcNAc-(1-&gt;2)-alpha-D-Man-(1-&gt;6)]-beta-D-Man-(1-&gt;4)-beta-D-GlcNAc-(1-&gt;4)-[alpha-L-Fuc-(1-&gt;6)]-beta-D-GlcNAc}-L-asparaginyl-[protein] + UDP-N-acetyl-alpha-D-glucosamine = N(4)-{beta-D-GlcNAc-(1-&gt;2)-[beta-D-GlcNAc-(1-&gt;4)]-alpha-D-Man-(1-&gt;3)-[beta-D-GlcNAc-(1-&gt;2)-alpha-D-Man-(1-&gt;6)]-beta-D-Man-(1-&gt;4)-beta-D-GlcNAc-(1-&gt;4)-[alpha-L-Fuc-(1-&gt;6)]-beta-D-GlcNAc}-asparaginyl-[protein] + UDP + H(+). It carries out the reaction an N(4)-{beta-D-GlcNAc-(1-&gt;2)-alpha-D-Man-(1-&gt;3)-[beta-D-Gal-(1-&gt;4)-beta-D-GlcNAc-(1-&gt;2)-alpha-D-Man-(1-&gt;6)]-beta-D-Man-(1-&gt;4)-beta-D-GlcNAc-(1-&gt;4)-beta-D-GlcNAc}-L-asparaginyl-[protein] + UDP-N-acetyl-alpha-D-glucosamine = an N(4)-{beta-D-GlcNAc-(1-&gt;2)-[beta-D-GlcNAc-(1-&gt;4)]-alpha-D-Man-(1-&gt;3)-[beta-D-Gal-(1-&gt;4)-beta-D-GlcNAc-(1-&gt;2)-alpha-D-Man-(1-&gt;6)]-beta-D-Man-(1-&gt;4)-beta-D-GlcNAc-(1-&gt;4)-beta-D-GlcNAc}-L-asparaginyl-[protein] + UDP + H(+). The enzyme catalyses N(4)-{beta-D-GlcNAc-(1-&gt;2)-alpha-D-Man-(1-&gt;3)-[alpha-D-Man-(1-&gt;3)-{alpha-D-Man-(1-&gt;6)}-alpha-D-Man-(1-&gt;6)]-beta-D-Man-(1-&gt;4)-beta-D-GlcNAc-(1-&gt;4)-beta-D-GlcNAc}-asparaginyl-[protein] + UDP-N-acetyl-alpha-D-glucosamine = N(4)-{beta-D-GlcNAc-(1-&gt;2)-[beta-D-GlcNAc-(1-&gt;4)]-alpha-D-Man-(1-&gt;3)-[alpha-D-Man-(1-&gt;3)-{alpha-D-Man-(1-&gt;6)}-alpha-D-Man-(1-&gt;6)]-beta-D-Man-(1-&gt;4)-beta-D-GlcNAc-(1-&gt;4)-beta-D-GlcNAc}-asparaginyl-[protein] + UDP + H(+). It catalyses the reaction N(4)-{beta-D-GlcNAc-(1-&gt;2)-alpha-D-Man-(1-&gt;3)-beta-D-Man-(1-&gt;4)-beta-D-GlcNAc-(1-&gt;4)-beta-D-GlcNAc}-asparaginyl-[protein] + UDP-N-acetyl-alpha-D-glucosamine = N(4)-{beta-D-GlcNAc-(1-&gt;2)-[beta-D-GlcNAc-(1-&gt;4)]-alpha-D-Man-(1-&gt;3)-beta-D-Man-(1-&gt;4)-beta-D-GlcNAc-(1-&gt;4)-beta-D-GlcNAc}-asparaginyl-[protein] + UDP + H(+). It functions in the pathway protein modification; protein glycosylation. With respect to regulation, inhibited by UDP. Its function is as follows. Glycosyltransferase that catalyze the transfer of GlcNAc from UDP-GlcNAc to the GlcNAcbeta1-2Manalpha1-3 arm of the core structure of N-linked glycans through a beta1-4 linkage and participates in the production of tri- and tetra-antennary N-linked sugar chains. Involved in glucose transport by mediating SLC2A2/GLUT2 glycosylation, thereby controlling cell-surface expression of SLC2A2 in pancreatic beta cells. The protein is Alpha-1,3-mannosyl-glycoprotein 4-beta-N-acetylglucosaminyltransferase A of Macaca fascicularis (Crab-eating macaque).